A 561-amino-acid polypeptide reads, in one-letter code: Putative transport protein YbjL (561 aa).

A run of 5 helical transmembrane segments spans residues 8–28, 32–52, 66–86, 94–114, and 158–178; these read LLNGNYILLLFVVLALGLCLG, LGSVQLGNSIGVLVVSLLLGQ, FMLFIFCVGVEAGPNFFSIFF, MLALVMVGSALLIALGLGKLF, and NLSLGYALTYLIGLVSLIVGA. RCK C-terminal domains follow at residues 200–288 and 292–373; these read RGLD…SFRN and VFDR…RIGF. 5 helical membrane passes run 383–403, 406–426, 447–467, 475–495, and 540–560; these read LLAFCAFFIIGLMIGMITFQF, FSFGIGNAAGLLFAGIMLGFL, FGLMVFMAGVGLSAGSGISNG, MLIAGLVVSLVPVVICFLFGA, and AIANVLLTLAGTLIVIIWPGL.

Belongs to the AAE transporter (TC 2.A.81) family. YbjL subfamily.

The protein resides in the cell membrane. The polypeptide is Putative transport protein YbjL (Salmonella dublin (strain CT_02021853)).